The sequence spans 430 residues: WD repeat-containing protein jip5 (430 aa).

6 WD repeats span residues 9-48 (PLSS…AAAE), 72-111 (RHKG…VTSK), 117-158 (TNTD…SFKS), 215-262 (DQEE…DQSE), 272-318 (AGGE…GVVE), and 323-360 (DDIE…EEEE). Over residues 356–374 (EEEEEEEEEEQEDIEDNDD) the composition is skewed to acidic residues. Residues 356–430 (EEEEEEEEEE…NGILKFKGME (75 aa)) form a disordered region. Basic and acidic residues predominate over residues 382-397 (HALERDSDDSDARADS). A compositionally biased stretch (basic residues) spans 405-416 (RKKRKKKKKGKK).

The protein belongs to the WD repeat WDR55 family.

The protein resides in the nucleus. It localises to the nucleolus. In Botryotinia fuckeliana (strain B05.10) (Noble rot fungus), this protein is WD repeat-containing protein jip5 (jip5).